The chain runs to 59 residues: Photosystem II reaction center protein K (59 aa).

Residues 1 to 22 (MLNIFSLICLNSDLYSSRFFLA) constitute a propeptide that is removed on maturation. Residues 38-58 (MPVIPLFFLLLAFVWQAAVSF) traverse the membrane as a helical segment.

Belongs to the PsbK family. In terms of assembly, PSII is composed of 1 copy each of membrane proteins PsbA, PsbB, PsbC, PsbD, PsbE, PsbF, PsbH, PsbI, PsbJ, PsbK, PsbL, PsbM, PsbT, PsbX, PsbY, PsbZ, Psb30/Ycf12, at least 3 peripheral proteins of the oxygen-evolving complex and a large number of cofactors. It forms dimeric complexes.

Its subcellular location is the plastid. It localises to the chloroplast thylakoid membrane. Its function is as follows. One of the components of the core complex of photosystem II (PSII). PSII is a light-driven water:plastoquinone oxidoreductase that uses light energy to abstract electrons from H(2)O, generating O(2) and a proton gradient subsequently used for ATP formation. It consists of a core antenna complex that captures photons, and an electron transfer chain that converts photonic excitation into a charge separation. The protein is Photosystem II reaction center protein K of Oenothera elata subsp. hookeri (Hooker's evening primrose).